The chain runs to 422 residues: Enolase (422 aa).

Q162 is a binding site for (2R)-2-phosphoglycerate. Catalysis depends on E204, which acts as the Proton donor. The Mg(2+) site is built by D241, E284, and D311. Positions 336, 365, 366, and 387 each coordinate (2R)-2-phosphoglycerate. K336 serves as the catalytic Proton acceptor.

It belongs to the enolase family. Mg(2+) serves as cofactor.

The protein resides in the cytoplasm. It localises to the secreted. The protein localises to the cell surface. The catalysed reaction is (2R)-2-phosphoglycerate = phosphoenolpyruvate + H2O. Its pathway is carbohydrate degradation; glycolysis; pyruvate from D-glyceraldehyde 3-phosphate: step 4/5. Its function is as follows. Catalyzes the reversible conversion of 2-phosphoglycerate (2-PG) into phosphoenolpyruvate (PEP). It is essential for the degradation of carbohydrates via glycolysis. This is Enolase from Bartonella tribocorum (strain CIP 105476 / IBS 506).